The chain runs to 523 residues: MPRDIPATKGVYLLERVTNKEINLENIDEEMRMEQVRQAGAKLDWASFGQAVRRNLQEKRNTIDADGRIDVLKSLAFMKTKLPIEADAPMEEKIRILAESLGCTHVRTTRGWTITKPEELNVDLTIKNGEVDTVVLSFWEEAAFYSGEATKMLHKGEWSELRDRLASMLAVYNKDLDRNDRKTCKAAMDVLGSMLKTMNADEMYTSIQNNNYGYYLHRSDLRQGRLYYNVEPLYRRVRSKHHTYSLQKEDWDILPFFEFSFVPSDSVHAFPEHNPYGEWKETGSAKAAVCLKLSKGVLVSEPTRRKLHEISARSTTIQCYTNCYRYLTGSVLIKDNLKMITQFPGECTQHHYTIDRSSFTSEGDSVITEIYLKRLQDFHKVIEILRKEAMHISIWESVLADCYELQGLEERVVPAINMFVNLSRDMITVRFMTKYAPIRVCIRDGVWIEAKVEVVNDQTGAKVADRVDELLTRKLNETWSIPIMLTFAVSGEDCALEQMKVPLREENPETKLPTPTKIIVHKN.

This sequence belongs to the Mediator complex subunit 1 family. As to quaternary structure, component of the Mediator complex.

The protein resides in the nucleus. Functionally, component of the Mediator complex, a coactivator involved in the regulated transcription of nearly all RNA polymerase II-dependent genes. Mediator functions as a bridge to convey information from gene-specific regulatory proteins to the basal RNA polymerase II transcription machinery. Mediator is recruited to promoters by direct interactions with regulatory proteins and serves as a scaffold for the assembly of a functional preinitiation complex with RNA polymerase II and the general transcription factors. This chain is Mediator of RNA polymerase II transcription subunit 1.2 (mdt-1.2), found in Caenorhabditis briggsae.